A 175-amino-acid chain; its full sequence is Ferritin light chain (175 aa).

Residue Ser2 is modified to N-acetylserine. The Ferritin-like diiron domain maps to 7 to 156; the sequence is QNYSTEVEAA…DHLTNIQRLV (150 aa). Glu54, Glu57, Glu58, Glu61, and Glu64 together coordinate Fe cation. The interval 54 to 61 is catalytic site for iron oxidation; sequence ELAEEKRE.

It belongs to the ferritin family. As to quaternary structure, oligomer of 24 subunits. There are two types of subunits: L (light) chain and H (heavy) chain. The major chain can be light or heavy, depending on the species and tissue type. The functional molecule forms a roughly spherical shell with a diameter of 12 nm and contains a central cavity into which the insoluble mineral iron core is deposited. Interacts with NCOA4.

Its subcellular location is the cytoplasmic vesicle. The protein localises to the autophagosome. It is found in the cytoplasm. It localises to the autolysosome. In terms of biological role, stores iron in a soluble, non-toxic, readily available form. Important for iron homeostasis. Iron is taken up in the ferrous form and deposited as ferric hydroxides after oxidation. Also plays a role in delivery of iron to cells. Mediates iron uptake in capsule cells of the developing kidney. Delivery to lysosomes by the cargo receptor NCOA4 for autophagic degradation and release or iron. The protein is Ferritin light chain (FTL) of Equus caballus (Horse).